Here is a 280-residue protein sequence, read N- to C-terminus: Putative pyruvate, phosphate dikinase regulatory protein (280 aa).

156-163 (GVSRTSKT) is a binding site for ADP.

This sequence belongs to the pyruvate, phosphate/water dikinase regulatory protein family. PDRP subfamily.

It catalyses the reaction N(tele)-phospho-L-histidyl/L-threonyl-[pyruvate, phosphate dikinase] + ADP = N(tele)-phospho-L-histidyl/O-phospho-L-threonyl-[pyruvate, phosphate dikinase] + AMP + H(+). The catalysed reaction is N(tele)-phospho-L-histidyl/O-phospho-L-threonyl-[pyruvate, phosphate dikinase] + phosphate + H(+) = N(tele)-phospho-L-histidyl/L-threonyl-[pyruvate, phosphate dikinase] + diphosphate. Bifunctional serine/threonine kinase and phosphorylase involved in the regulation of the pyruvate, phosphate dikinase (PPDK) by catalyzing its phosphorylation/dephosphorylation. The sequence is that of Putative pyruvate, phosphate dikinase regulatory protein from Hyphomonas neptunium (strain ATCC 15444).